A 1158-amino-acid chain; its full sequence is Type IV pilus biogenesis factor PilY1 (1158 aa).

A signal peptide spans 1-29 (MIHQITRAGKSLLAAGCTLSILFASDSYA). Ca(2+)-binding residues include D841, N843, D845, I847, and D849.

This sequence belongs to the PilY1 family.

It is found in the fimbrium. The protein localises to the membrane. It localises to the cytoplasm. The protein resides in the cytosol. Functionally, involved in pilus assembly, twitching motility and adhesion to host cells. Primes type IV pili (T4P) assembly and is required for inclusion of minor pilins PilV, PilW and PilX to the surface pili. Stabilizes assembled pilus fibers likely by antagonizing retraction mediated by PilT. Calcium-binding and calcium release by PilY1 seem to be essential for twitching motility and for regulation of pilus retraction dynamics of PilT. Regulates surface-activated virulence possibly by acting as a surface-attachment mechanosensor. This is Type IV pilus biogenesis factor PilY1 from Pseudomonas aeruginosa (strain UCBPP-PA14).